We begin with the raw amino-acid sequence, 434 residues long: Nicotinate phosphoribosyltransferase (434 aa).

His242 carries the phosphohistidine; by autocatalysis modification.

This sequence belongs to the NAPRTase family. Transiently phosphorylated on a His residue during the reaction cycle. Phosphorylation strongly increases the affinity for substrates and increases the rate of nicotinate D-ribonucleotide production. Dephosphorylation regenerates the low-affinity form of the enzyme, leading to product release.

It carries out the reaction nicotinate + 5-phospho-alpha-D-ribose 1-diphosphate + ATP + H2O = nicotinate beta-D-ribonucleotide + ADP + phosphate + diphosphate. It participates in cofactor biosynthesis; NAD(+) biosynthesis; nicotinate D-ribonucleotide from nicotinate: step 1/1. In terms of biological role, catalyzes the synthesis of beta-nicotinate D-ribonucleotide from nicotinate and 5-phospho-D-ribose 1-phosphate at the expense of ATP. This chain is Nicotinate phosphoribosyltransferase, found in Mesorhizobium japonicum (strain LMG 29417 / CECT 9101 / MAFF 303099) (Mesorhizobium loti (strain MAFF 303099)).